The chain runs to 253 residues: Tetraspanin-11 (253 aa).

4 consecutive transmembrane segments (helical) span residues Leu-19–Val-39, Ile-63–Ile-83, Leu-90–Leu-110, and Leu-220–Leu-240.

This sequence belongs to the tetraspanin (TM4SF) family.

The protein localises to the membrane. This Bos taurus (Bovine) protein is Tetraspanin-11 (TSPAN11).